Consider the following 1875-residue polypeptide: Nonribosomal peptide synthetase otaB (1875 aa).

The interval 202 to 590 is adenylation 1; it reads GQVRENGDRA…SIRFAGRRQA (389 aa). A Carrier domain is found at 724 to 800; the sequence is SPMTAAERVM…DLVAHIKDAG (77 aa). The residue at position 761 (S761) is an O-(pantetheine 4'-phosphoryl)serine. The segment at 836 to 1245 is condensation; it reads EDVYPCTTLQ…LVSPLDEERL (410 aa). The tract at residues 1264–1659 is adenylation 2; it reads QKQSYAQPQA…ARKDTQVKIR (396 aa).

Belongs to the NRP synthetase family.

It carries out the reaction 7-carboxymellein + L-phenylalanine + ATP = ochratoxin B + ADP + phosphate + H(+). Its pathway is mycotoxin biosynthesis. Functionally, nonribosomal peptide synthetase; part of the gene cluster that mediates the biosynthesis of ochratoxin A (OTA), a mycotoxin composed of a chlorinated type I polyketide dihydroisocoumarin moiety linked to L-phenylalanine, and demonstrated to have nephrotoxic, immunotoxic, genotoxic, neurotoxic, and teratogenic properties. OtaB is responsible for the linking of phenylalanine to the dihydroisocoumarin ring. The pathway begins with the highly reducing polyketide synthase otaA that catalyzes the formation of the isocoumarin group during the initial stages of biosynthesis, starting from one acetate and 4 malonate units, to originate the characteristic pentaketide skeleton 7-methylmellein (7-MM) of the OTA molecule. The newly identified cyclase otaY might be involved in the polyketide cyclization reaction during the initial steps of the OTA biosynthesis. 7-MM is then oxidized into 7-carboxymellein (also called ochratoxin beta) by the cytochrome P450 monooxygenase otaC. The NRPS encoded by the otaB gene is involved in the linking of phenylalanine to the dihydroisocoumarin ring. The reaction catalyzed by NRPS results in the production of ochratoxin B (OTB), which is the non-chlorinated analog of OTA and which subsequently serves as the substrate of the halogenase otaD for chlorination activity to form the final molecular structure of OTA, containing a chlorine atom in the C-5 position of the molecule. The protein is Nonribosomal peptide synthetase otaB of Aspergillus carbonarius (strain ITEM 5010).